Reading from the N-terminus, the 164-residue chain is Phosphopantetheine adenylyltransferase (164 aa).

Substrate is bound at residue Ser9. Residues 9 to 10 (SF) and His17 each bind ATP. Lys41, Ala78, and Arg92 together coordinate substrate. ATP contacts are provided by residues 93–95 (GLR), Glu103, and 128–134 (SRPITAT).

It belongs to the bacterial CoaD family. As to quaternary structure, homohexamer. Mg(2+) serves as cofactor.

It is found in the cytoplasm. It catalyses the reaction (R)-4'-phosphopantetheine + ATP + H(+) = 3'-dephospho-CoA + diphosphate. It participates in cofactor biosynthesis; coenzyme A biosynthesis; CoA from (R)-pantothenate: step 4/5. In terms of biological role, reversibly transfers an adenylyl group from ATP to 4'-phosphopantetheine, yielding dephospho-CoA (dPCoA) and pyrophosphate. The sequence is that of Phosphopantetheine adenylyltransferase from Allorhizobium ampelinum (strain ATCC BAA-846 / DSM 112012 / S4) (Agrobacterium vitis (strain S4)).